A 202-amino-acid chain; its full sequence is Imidazoleglycerol-phosphate dehydratase (202 aa).

This sequence belongs to the imidazoleglycerol-phosphate dehydratase family.

The protein resides in the cytoplasm. The enzyme catalyses D-erythro-1-(imidazol-4-yl)glycerol 3-phosphate = 3-(imidazol-4-yl)-2-oxopropyl phosphate + H2O. It participates in amino-acid biosynthesis; L-histidine biosynthesis; L-histidine from 5-phospho-alpha-D-ribose 1-diphosphate: step 6/9. This chain is Imidazoleglycerol-phosphate dehydratase, found in Salinibacter ruber (strain DSM 13855 / M31).